We begin with the raw amino-acid sequence, 525 residues long: MSEYLQQIAKRRTFAIISHPDAGKTTITEKMLLFGNAIKTAGTVKAKKSGIYATSDWMEMEKQRGISITTSVMQFPYNGRIINLLDTPGHEDFSEDTYRTLTAVDSALMVVDAVKGVEDRTIKLMNVCRLRDTPIVTFMNKFDRDTRDPLELLDEVENILKIKCAPMNWPIGMGKYFKGVYDLYNDEVTLFETGHGHEIYPYKKIKGLANAKDAIGIDLYEDLEMEIDLVRGASHEFDEQEFLEGNLTPVYFGTALSNFGVKEMMDGFTRYAPAPQHREADQRVVAADEQKLTGFVFKIQANMDEKHRNRIAFFRICSGKYEKGMKIFHERTGKQMQISKALTFMAGEREQVEEGYAGDIIGLHNHGSIQIGDSFTQGEKLKFKGIPNFAPEIFKRVKLNDPLKMKALQKGLVQLSEEGATQVFKPFISNDLVLGAVGVLQFDVVAQRLASEYNVKCSYEGVNVTLARWIFCSDEKKLNDFKKKYEVNLAYDGAGYLTYLAPTGVNLQLAQEKNPDIIFSATREH.

The tr-type G domain maps to 9–276 (AKRRTFAIIS…GFTRYAPAPQ (268 aa)). Residues 18 to 25 (SHPDAGKT), 86 to 90 (DTPGH), and 140 to 143 (NKFD) contribute to the GTP site.

This sequence belongs to the TRAFAC class translation factor GTPase superfamily. Classic translation factor GTPase family. PrfC subfamily.

It localises to the cytoplasm. Its function is as follows. Increases the formation of ribosomal termination complexes and stimulates activities of RF-1 and RF-2. It binds guanine nucleotides and has strong preference for UGA stop codons. It may interact directly with the ribosome. The stimulation of RF-1 and RF-2 is significantly reduced by GTP and GDP, but not by GMP. This chain is Peptide chain release factor 3, found in Francisella tularensis subsp. mediasiatica (strain FSC147).